Consider the following 142-residue polypeptide: Alpha-lactalbumin (142 aa).

The N-terminal stretch at 1–19 is a signal peptide; the sequence is MMSFVSLLLVGILFHATQA. In terms of domain architecture, C-type lysozyme spans 20-142; that stretch reads EQLTKCEVFR…KLDQWLCEKL (123 aa). 4 cysteine pairs are disulfide-bonded: Cys25–Cys139, Cys47–Cys130, Cys80–Cys96, and Cys92–Cys110. Residues Asn64 and Asn93 are each glycosylated (N-linked (GlcNAc...) asparagine). Ca(2+) contacts are provided by Lys98, Asp101, Asp103, Asp106, and Asp107.

This sequence belongs to the glycosyl hydrolase 22 family. As to quaternary structure, lactose synthase (LS) is a heterodimer of a catalytic component, beta1,4-galactosyltransferase (beta4Gal-T1) and a regulatory component, alpha-lactalbumin (LA). Mammary gland specific. Secreted in milk.

The protein resides in the secreted. In terms of biological role, regulatory subunit of lactose synthase, changes the substrate specificity of galactosyltransferase in the mammary gland making glucose a good acceptor substrate for this enzyme. This enables LS to synthesize lactose, the major carbohydrate component of milk. In other tissues, galactosyltransferase transfers galactose onto the N-acetylglucosamine of the oligosaccharide chains in glycoproteins. The polypeptide is Alpha-lactalbumin (LALBA) (Bos mutus grunniens (Wild yak)).